Consider the following 217-residue polypeptide: Large ribosomal subunit protein uL3 (217 aa).

Residues 134-154 (DATHGNSLSHRAPGSIGQCQT) form a disordered region. Gln153 is subject to N5-methylglutamine.

It belongs to the universal ribosomal protein uL3 family. As to quaternary structure, part of the 50S ribosomal subunit. Forms a cluster with proteins L14 and L19. Methylated by PrmB.

In terms of biological role, one of the primary rRNA binding proteins, it binds directly near the 3'-end of the 23S rRNA, where it nucleates assembly of the 50S subunit. This chain is Large ribosomal subunit protein uL3, found in Coxiella burnetii (strain Dugway 5J108-111).